The following is a 460-amino-acid chain: Probable asparagine--tRNA ligase, mitochondrial (460 aa).

The protein belongs to the class-II aminoacyl-tRNA synthetase family.

It is found in the mitochondrion matrix. It catalyses the reaction tRNA(Asn) + L-asparagine + ATP = L-asparaginyl-tRNA(Asn) + AMP + diphosphate + H(+). The polypeptide is Probable asparagine--tRNA ligase, mitochondrial (asnS2) (Dictyostelium discoideum (Social amoeba)).